Here is a 140-residue protein sequence, read N- to C-terminus: UPF0179 protein Msp_0996 (140 aa).

It belongs to the UPF0179 family.

The protein is UPF0179 protein Msp_0996 of Methanosphaera stadtmanae (strain ATCC 43021 / DSM 3091 / JCM 11832 / MCB-3).